We begin with the raw amino-acid sequence, 274 residues long: Ribosomal RNA small subunit methyltransferase A (274 aa).

Positions 15, 17, 42, 64, 89, and 109 each coordinate S-adenosyl-L-methionine.

The protein belongs to the class I-like SAM-binding methyltransferase superfamily. rRNA adenine N(6)-methyltransferase family. RsmA subfamily.

The protein localises to the cytoplasm. It catalyses the reaction adenosine(1518)/adenosine(1519) in 16S rRNA + 4 S-adenosyl-L-methionine = N(6)-dimethyladenosine(1518)/N(6)-dimethyladenosine(1519) in 16S rRNA + 4 S-adenosyl-L-homocysteine + 4 H(+). Its function is as follows. Specifically dimethylates two adjacent adenosines (A1518 and A1519) in the loop of a conserved hairpin near the 3'-end of 16S rRNA in the 30S particle. May play a critical role in biogenesis of 30S subunits. The chain is Ribosomal RNA small subunit methyltransferase A from Synechococcus sp. (strain CC9902).